Here is a 97-residue protein sequence, read N- to C-terminus: uncharacterized protein (97 aa).

This is an uncharacterized protein from Escherichia coli (strain K12).